Consider the following 213-residue polypeptide: 3,4-dihydroxy-2-butanone 4-phosphate synthase (213 aa).

D-ribulose 5-phosphate contacts are provided by residues 37-38, D42, 150-154, and E174; these read RE and RSGHT. Position 38 (E38) interacts with Mg(2+). H153 contributes to the Mg(2+) binding site.

The protein belongs to the DHBP synthase family. Homodimer. It depends on Mg(2+) as a cofactor. Requires Mn(2+) as cofactor.

The catalysed reaction is D-ribulose 5-phosphate = (2S)-2-hydroxy-3-oxobutyl phosphate + formate + H(+). It functions in the pathway cofactor biosynthesis; riboflavin biosynthesis; 2-hydroxy-3-oxobutyl phosphate from D-ribulose 5-phosphate: step 1/1. In terms of biological role, catalyzes the conversion of D-ribulose 5-phosphate to formate and 3,4-dihydroxy-2-butanone 4-phosphate. The sequence is that of 3,4-dihydroxy-2-butanone 4-phosphate synthase from Blochmanniella floridana.